The chain runs to 87 residues: uncharacterized protein (87 aa).

2 helical membrane passes run 8 to 28 (IVVL…IFDL) and 47 to 67 (LAGS…LIGL).

It localises to the cell membrane. This is an uncharacterized protein from Bacillus subtilis (strain 168).